A 208-amino-acid chain; its full sequence is Small ribosomal subunit protein uS4 (208 aa).

An S4 RNA-binding domain is found at 98-164; sequence TRLDNVVYRL…PKVKSIREIA (67 aa).

The protein belongs to the universal ribosomal protein uS4 family. In terms of assembly, part of the 30S ribosomal subunit. Contacts protein S5. The interaction surface between S4 and S5 is involved in control of translational fidelity.

One of the primary rRNA binding proteins, it binds directly to 16S rRNA where it nucleates assembly of the body of the 30S subunit. Functionally, with S5 and S12 plays an important role in translational accuracy. This is Small ribosomal subunit protein uS4 from Ruminiclostridium cellulolyticum (strain ATCC 35319 / DSM 5812 / JCM 6584 / H10) (Clostridium cellulolyticum).